The sequence spans 144 residues: Catabolic 3-dehydroquinase 1 (144 aa).

Tyr-24 (proton acceptor) is an active-site residue. Residues Asn-75, His-81, and Asp-88 each coordinate substrate. Catalysis depends on His-101, which acts as the Proton donor. Residues 102 to 103 (IS) and Arg-112 contribute to the substrate site.

This sequence belongs to the type-II 3-dehydroquinase family. As to quaternary structure, homododecamer. Adopts a ring-like structure, composed of an arrangement of two hexameric rings stacked on top of one another.

It carries out the reaction 3-dehydroquinate = 3-dehydroshikimate + H2O. It participates in aromatic compound metabolism; 3,4-dihydroxybenzoate biosynthesis; 3,4-dihydroxybenzoate from 3-dehydroquinate: step 1/2. Functionally, is involved in the catabolism of quinate. Allows the utilization of quinate as carbon source via the beta-ketoadipate pathway. The polypeptide is Catabolic 3-dehydroquinase 1 (Fusarium vanettenii (strain ATCC MYA-4622 / CBS 123669 / FGSC 9596 / NRRL 45880 / 77-13-4) (Fusarium solani subsp. pisi)).